A 461-amino-acid polypeptide reads, in one-letter code: MEDLDALLSDLETTTSHMSRLGAPKERPPETLTPPPPYGHQPQTGSGESSGASGDKDHLYSTVCKPRSPKSVAPVAPPFSSSSGVLGNGLCELDRLLQELNATQFNITDEIMSQFPSSKMAEGEGKEDQSEDKSITTVPSSTFPAPSKPSATSATQELDRLMASLSDFRVQNHLPASGPPQPPAVSPTREGCPSPPGQTNKGSLDTMLGLLQSDLSRRGVPTQAKGLCGSCNKPIAGQVVTALGRAWHPEHFLCRGCSTTLGGSSFFEKDGAPFCPECYFERFSPRCGFCNQPIRHKMVTALGTHWHPEHFCCVSCGEPFGEEGFHEREGRPYCRRDFLQLFAPRCQGCQGPILDNYISALSALWHPDCFVCRECLAPFSGGSFFEHEGRPLCENHFHAQRGSLCATCGLPVTGRCVSALGRRFHPDHFTCTFCLRPLTKGSFQERASKPYCQPCFLKLFG.

Methionine 1 is modified (N-acetylmethionine). Positions 1 to 86 (MEDLDALLSD…PPFSSSSGVL (86 aa)) are disordered. Positions 1–200 (MEDLDALLSD…GCPSPPGQTN (200 aa)) are transcription activation. An interaction with PTK2B/PYK2 region spans residues 1–240 (MEDLDALLSD…CNKPIAGQVV (240 aa)). The LD motif 1 signature appears at 3-15 (DLDALLSDLETTT). Threonine 33 carries the post-translational modification Phosphothreonine. Phosphotyrosine is present on tyrosine 38. The span at 41 to 52 (QPQTGSGESSGA) shows a compositional bias: polar residues. Position 60 is a phosphotyrosine; by FAK2 and FYN (tyrosine 60). Serine 68 carries the post-translational modification Phosphoserine. Low complexity predominate over residues 69–83 (PKSVAPVAPPFSSSS). The tract at residues 83–136 (SGVLGNGLCELDRLLQELNATQFNITDEIMSQFPSSKMAEGEGKEDQSEDKSIT) is interaction with PTK2/FAK1. Residues 92 to 104 (ELDRLLQELNATQ) carry the LD motif 2 motif. The interval 116–154 (PSSKMAEGEGKEDQSEDKSITTVPSSTFPAPSKPSATSA) is disordered. A compositionally biased stretch (basic and acidic residues) spans 121-134 (AEGEGKEDQSEDKS). The segment covering 135–154 (ITTVPSSTFPAPSKPSATSA) has biased composition (polar residues). 4 positions are modified to phosphoserine: serine 140, serine 141, serine 164, and serine 186. The LD motif 3 signature appears at 157–168 (ELDRLMASLSDF). A disordered region spans residues 171–204 (QNHLPASGPPQPPAVSPTREGCPSPPGQTNKGSL). The residue at position 188 (threonine 188) is a Phosphothreonine. Position 194 is a phosphoserine (serine 194). The LD motif 4 signature appears at 203–215 (SLDTMLGLLQSDL). LIM zinc-binding domains lie at 226–285 (GLCG…RFSP), 286–343 (RCGF…QLFA), 344–403 (PRCQ…QRGS), and 404–461 (LCAT…KLFG). Serine 403 carries the phosphoserine modification. Residue threonine 407 is modified to Phosphothreonine.

This sequence belongs to the paxillin family. As to quaternary structure, homooligomer. Interacts with PPARG. Interacts with TRAF4. Interacts with CRIP2. Interacts with HSPB1. Interacts with ILK. Interacts with LIMS1 and LIMS2. Interacts with NCK2. Interacts with NUDT16L1. Interacts with PAK. Interacts with PTPN12. Interacts with TCF3. Interacts with TCF7L2. Interacts with VCL. Interacts (via LD motif 3) with GIT1. Also interacts with GIT2. Forms a complex with ARHGEF7. Interacts with AR/androgen receptor in a ligand-dependent manner. Interacts with CSK. Interacts with PTK2/FAK1 and PTK2B/PYK2. Interacts with SLC6A3 and SLC6A4. Interacts with NR3C1. Interacts with SMAD3. Interacts with MAPK15. Interacts with SRC. Interacts with LYN. Interacts with talin. Interacts (via LIM zinc-binding domain 2) with CBLC (via RING-type zinc finger); the interaction is direct and enhances CBLC E3 ubiquitin-protein ligase activity. Interacts with PARVA. Interacts with PXN. Post-translationally, phosphorylated by gonadotropin-releasing hormone-activated SRC. As to expression, strongly expressed in large intestine, lung, spleen, testis, uterus and to a lower extent in brain, kidney and liver (at protein level). In brain, expressed by neuronal and non neuronal cells (at protein level).

It localises to the cell junction. Its subcellular location is the focal adhesion. It is found in the nucleus matrix. The protein resides in the cytoplasm. The protein localises to the cytoskeleton. Functionally, functions as a molecular adapter coordinating multiple protein-protein interactions at the focal adhesion complex and in the nucleus. Links various intracellular signaling modules to plasma membrane receptors and regulates the Wnt and TGFB signaling pathways. May also regulate SLC6A3 and SLC6A4 targeting to the plasma membrane hence regulating their activity. In the nucleus, functions as a nuclear receptor coactivator regulating glucocorticoid, androgen, mineralocorticoid and progesterone receptor transcriptional activity. May play a role in the processes of cell growth, proliferation, migration, differentiation and senescence. May have a zinc-dependent DNA-binding activity. The sequence is that of Transforming growth factor beta-1-induced transcript 1 protein (Tgfb1i1) from Rattus norvegicus (Rat).